The sequence spans 300 residues: Probable alpha-L-glutamate ligase (300 aa).

Residues 104-287 form the ATP-grasp domain; it reads LQLLARQGID…IAGRMIQWIE (184 aa). Residues lysine 141, 178 to 179, aspartate 187, and 211 to 213 each bind ATP; these read EY and RSN. 3 residues coordinate Mg(2+): aspartate 248, glutamate 260, and asparagine 262. Mn(2+) is bound by residues aspartate 248, glutamate 260, and asparagine 262.

It belongs to the RimK family. Requires Mg(2+) as cofactor. Mn(2+) serves as cofactor.

This chain is Probable alpha-L-glutamate ligase, found in Citrobacter koseri (strain ATCC BAA-895 / CDC 4225-83 / SGSC4696).